A 190-amino-acid chain; its full sequence is Dirigent protein 15 (190 aa).

Residues 1–19 (MKSTLIIFFTLCLSMAVMA) form the signal peptide. Residues N63 and N128 are each glycosylated (N-linked (GlcNAc...) asparagine).

This sequence belongs to the plant dirigent protein family. As to quaternary structure, homodimer.

It localises to the secreted. It is found in the extracellular space. Its subcellular location is the apoplast. In terms of biological role, dirigent proteins impart stereoselectivity on the phenoxy radical-coupling reaction, yielding optically active lignans from two molecules of coniferyl alcohol in the biosynthesis of lignans, flavonolignans, and alkaloids and thus plays a central role in plant secondary metabolism. In Arabidopsis thaliana (Mouse-ear cress), this protein is Dirigent protein 15 (DIR15).